We begin with the raw amino-acid sequence, 290 residues long: 33 kDa chaperonin (290 aa).

Cystine bridges form between Cys235–Cys237 and Cys268–Cys271.

This sequence belongs to the HSP33 family. Under oxidizing conditions two disulfide bonds are formed involving the reactive cysteines. Under reducing conditions zinc is bound to the reactive cysteines and the protein is inactive.

Its subcellular location is the cytoplasm. Functionally, redox regulated molecular chaperone. Protects both thermally unfolding and oxidatively damaged proteins from irreversible aggregation. Plays an important role in the bacterial defense system toward oxidative stress. This chain is 33 kDa chaperonin, found in Streptococcus equi subsp. zooepidemicus (strain H70).